The primary structure comprises 325 residues: Glutarate 2-hydroxylase (325 aa).

Histidine 160, aspartate 162, and histidine 292 together coordinate Fe cation.

Belongs to the glutarate hydroxylase family. Homotetramer. The cofactor is Fe(2+).

The catalysed reaction is glutarate + 2-oxoglutarate + O2 = (S)-2-hydroxyglutarate + succinate + CO2. Its pathway is amino-acid degradation. Its function is as follows. Acts as an alpha-ketoglutarate-dependent dioxygenase catalyzing hydroxylation of glutarate (GA) to L-2-hydroxyglutarate (L2HG). Functions in a L-lysine degradation pathway that proceeds via cadaverine, glutarate and L-2-hydroxyglutarate. The chain is Glutarate 2-hydroxylase from Escherichia coli (strain UTI89 / UPEC).